The sequence spans 189 residues: uncharacterized protein (189 aa).

4 helical membrane passes run 49 to 69 (LLGI…LFVF), 78 to 98 (LFHK…LSLF), 102 to 122 (LTIV…FPMI), and 124 to 144 (VSIA…LFPA). Residues 165–189 (SSSAPDLNYPSLPTQSASPSQRFSA) form a disordered region.

This sequence belongs to the chlamydial CPn_0442/CT_006/TC_0274 family.

The protein localises to the cell membrane. This is an uncharacterized protein from Chlamydia trachomatis serovar D (strain ATCC VR-885 / DSM 19411 / UW-3/Cx).